Consider the following 175-residue polypeptide: SsrA-binding protein (175 aa).

The protein belongs to the SmpB family.

It localises to the cytoplasm. Required for rescue of stalled ribosomes mediated by trans-translation. Binds to transfer-messenger RNA (tmRNA), required for stable association of tmRNA with ribosomes. tmRNA and SmpB together mimic tRNA shape, replacing the anticodon stem-loop with SmpB. tmRNA is encoded by the ssrA gene; the 2 termini fold to resemble tRNA(Ala) and it encodes a 'tag peptide', a short internal open reading frame. During trans-translation Ala-aminoacylated tmRNA acts like a tRNA, entering the A-site of stalled ribosomes, displacing the stalled mRNA. The ribosome then switches to translate the ORF on the tmRNA; the nascent peptide is terminated with the 'tag peptide' encoded by the tmRNA and targeted for degradation. The ribosome is freed to recommence translation, which seems to be the essential function of trans-translation. In Prochlorococcus marinus subsp. pastoris (strain CCMP1986 / NIES-2087 / MED4), this protein is SsrA-binding protein.